We begin with the raw amino-acid sequence, 554 residues long: Urocanate hydratase (554 aa).

Residues 51–52 (GG), Gln129, 175–177 (GMG), Glu195, 241–242 (NA), 262–266 (QTSAH), 272–273 (YL), and Tyr321 each bind NAD(+). The active site involves Cys409. Residue Gly491 participates in NAD(+) binding.

The protein belongs to the urocanase family. NAD(+) serves as cofactor.

Its subcellular location is the cytoplasm. The enzyme catalyses 4-imidazolone-5-propanoate = trans-urocanate + H2O. Its pathway is amino-acid degradation; L-histidine degradation into L-glutamate; N-formimidoyl-L-glutamate from L-histidine: step 2/3. In terms of biological role, catalyzes the conversion of urocanate to 4-imidazolone-5-propionate. The protein is Urocanate hydratase of Caulobacter vibrioides (strain ATCC 19089 / CIP 103742 / CB 15) (Caulobacter crescentus).